Reading from the N-terminus, the 347-residue chain is ATPase GET3 (347 aa).

26 to 33 serves as a coordination point for ATP; it reads KGGVGKTT. The active site involves Asp57. Residues Glu240 and Asn267 each coordinate ATP. Positions 279 and 282 each coordinate Zn(2+).

It belongs to the arsA ATPase family. In terms of assembly, homodimer. Component of the Golgi to ER traffic (GET) complex, which is composed of GET1, GET2 and GET3. Within the complex, GET1 and GET2 form a heterotetramer which is stabilized by phosphatidylinositol binding and which binds to the GET3 homodimer. Interacts with the chloride channel protein GEF1.

It localises to the cytoplasm. Its subcellular location is the endoplasmic reticulum. It is found in the golgi apparatus. Its function is as follows. ATPase required for the post-translational delivery of tail-anchored (TA) proteins to the endoplasmic reticulum. Recognizes and selectively binds the transmembrane domain of TA proteins in the cytosol. This complex then targets to the endoplasmic reticulum by membrane-bound receptors GET1 and GET2, where the tail-anchored protein is released for insertion. This process is regulated by ATP binding and hydrolysis. ATP binding drives the homodimer towards the closed dimer state, facilitating recognition of newly synthesized TA membrane proteins. ATP hydrolysis is required for insertion. Subsequently, the homodimer reverts towards the open dimer state, lowering its affinity for the GET1-GET2 receptor, and returning it to the cytosol to initiate a new round of targeting. Cooperates with the HDEL receptor ERD2 to mediate the ATP-dependent retrieval of resident ER proteins that contain a C-terminal H-D-E-L retention signal from the Golgi to the ER. Involved in low-level resistance to the oxyanions arsenite and arsenate, and in heat tolerance. In Scheffersomyces stipitis (strain ATCC 58785 / CBS 6054 / NBRC 10063 / NRRL Y-11545) (Yeast), this protein is ATPase GET3.